Here is a 242-residue protein sequence, read N- to C-terminus: Beta-glucanase (242 aa).

The first 28 residues, 1 to 28 (MPYLKRVLLLLVTGLFMSLFAVTATASA), serve as a signal peptide directing secretion. Q29 is modified (pyrrolidone carboxylic acid). Residues 29–242 (QTGGSFFDPF…HYDWVRYTKK (214 aa)) enclose the GH16 domain. A disulfide bridge connects residues C60 and C89. Residue E133 is the Nucleophile of the active site. The active-site Proton donor is E137.

It belongs to the glycosyl hydrolase 16 family.

It is found in the secreted. It carries out the reaction Hydrolysis of (1-&gt;4)-beta-D-glucosidic linkages in beta-D-glucans containing (1-&gt;3)- and (1-&gt;4)-bonds.. The polypeptide is Beta-glucanase (bglS) (Bacillus subtilis (strain 168)).